A 161-amino-acid polypeptide reads, in one-letter code: Deoxyuridine 5'-triphosphate nucleotidohydrolase (161 aa).

Substrate is bound by residues 80–82 (RSG), Asn93, 97–99 (TVD), and Lys107.

The protein belongs to the dUTPase family. Mg(2+) serves as cofactor.

It carries out the reaction dUTP + H2O = dUMP + diphosphate + H(+). It functions in the pathway pyrimidine metabolism; dUMP biosynthesis; dUMP from dCTP (dUTP route): step 2/2. In terms of biological role, this enzyme is involved in nucleotide metabolism: it produces dUMP, the immediate precursor of thymidine nucleotides and it decreases the intracellular concentration of dUTP so that uracil cannot be incorporated into DNA. This Mesorhizobium japonicum (strain LMG 29417 / CECT 9101 / MAFF 303099) (Mesorhizobium loti (strain MAFF 303099)) protein is Deoxyuridine 5'-triphosphate nucleotidohydrolase.